The sequence spans 372 residues: Citrate/2-methylcitrate synthase (372 aa).

Residue histidine 188 coordinates substrate. Histidine 223 is a catalytic residue. Residue 256–260 (KIMGF) participates in CoA binding. Histidine 262 is a catalytic residue. Substrate is bound at residue arginine 272. The active site involves aspartate 314. The substrate site is built by arginine 339 and arginine 358.

The protein belongs to the citrate synthase family.

It carries out the reaction propanoyl-CoA + oxaloacetate + H2O = 2-methylcitrate + CoA + H(+). The catalysed reaction is oxaloacetate + acetyl-CoA + H2O = citrate + CoA + H(+). The protein operates within carbohydrate metabolism; tricarboxylic acid cycle; isocitrate from oxaloacetate: step 1/2. Involved in both the tricarboxylic acid (TCA) and methylcitric acid cycles. Has both 2-methylcitrate synthase and citrate synthase activities. Catalyzes the condensation of propionyl-CoA and oxaloacetate to yield 2-methylcitrate (2-MC) and CoA, and the condensation of acetyl-CoA and oxaloacetate to yield citrate and CoA. Has 2.3-fold higher activity as a 2-methylcitrate synthase. Catalyzes the formation of either (2S,3R)- or (2R,3S)-2-methylcitrate. The sequence is that of Citrate/2-methylcitrate synthase from Bacillus subtilis (strain 168).